Reading from the N-terminus, the 209-residue chain is Large ribosomal subunit protein uL4 (209 aa).

The segment at 46-71 is disordered; sequence GTSSTKTRSEVRGSSKKPWKQKGTGR. Residues 59 to 71 are compositionally biased toward basic residues; that stretch reads SSKKPWKQKGTGR.

This sequence belongs to the universal ribosomal protein uL4 family. In terms of assembly, part of the 50S ribosomal subunit.

One of the primary rRNA binding proteins, this protein initially binds near the 5'-end of the 23S rRNA. It is important during the early stages of 50S assembly. It makes multiple contacts with different domains of the 23S rRNA in the assembled 50S subunit and ribosome. Functionally, forms part of the polypeptide exit tunnel. This is Large ribosomal subunit protein uL4 from Borreliella afzelii (strain PKo) (Borrelia afzelii).